We begin with the raw amino-acid sequence, 75 residues long: Tautomerase PptA (75 aa).

Pro-2 serves as the catalytic Proton acceptor; via imino nitrogen.

This sequence belongs to the 4-oxalocrotonate tautomerase family. PptA subfamily. Homodimer.

The protein localises to the cytoplasm. The sequence is that of Tautomerase PptA from Escherichia coli (strain SMS-3-5 / SECEC).